Here is a 454-residue protein sequence, read N- to C-terminus: NADP-specific glutamate dehydrogenase (454 aa).

Residue Ser-2 is modified to N-acetylserine. Lys-114 is an active-site residue.

Belongs to the Glu/Leu/Phe/Val dehydrogenases family. Homohexamer.

The catalysed reaction is L-glutamate + NADP(+) + H2O = 2-oxoglutarate + NH4(+) + NADPH + H(+). In Neurospora intermedia, this protein is NADP-specific glutamate dehydrogenase (GDH).